Consider the following 248-residue polypeptide: Tyrosine recombinase XerD-like (248 aa).

In terms of domain architecture, Core-binding (CB) spans Met-1–Tyr-72. One can recognise a Tyr recombinase domain in the interval Asp-85–Ser-248. Residues Lys-149 and Arg-213 contribute to the active site. Tyr-245 serves as the catalytic O-(3'-phospho-DNA)-tyrosine intermediate.

Belongs to the 'phage' integrase family. XerD-like subfamily.

The protein localises to the cytoplasm. In terms of biological role, putative tyrosine recombinase. Not involved in the cutting and rejoining of the recombining DNA molecules on dif(SL) site. The protein is Tyrosine recombinase XerD-like of Streptococcus pyogenes serotype M4 (strain MGAS10750).